The chain runs to 194 residues: Myelin-associated neurite-outgrowth inhibitor (194 aa).

The residue at position 1 (Met-1) is an N-acetylmethionine. Topologically, residues 1-18 (MNPVYSPGSSGVPYANAK) are cytoplasmic. Residue Ser-6 is modified to Phosphoserine. Residues 19–41 (GIGYPAGFPVGYAAAPAYSPNMY) traverse the membrane as a helical segment. Residues 42–141 (PGANPTFQTG…PAPIPPPRGS (100 aa)) are Extracellular-facing. Asn-45 carries N-linked (GlcNAc...) asparagine glycosylation. A helical transmembrane segment spans residues 142–163 (GVTMGMVAGTTMAMSAGTLLTA). The Cytoplasmic segment spans residues 164 to 194 (HSPTPVAPHPVTVPTYRAPGTPTYSYVPPQW).

This sequence belongs to the FAM168 family. As to quaternary structure, may form homodimers. May interact with DAZAP2, FAM168A, PRDX6, RBM6, TMTC1 and YPEL2. Interacts with CDC27. Post-translationally, N-glycosylated. Predominantly expressed in the brain, including olfactory bulb, cortex and cerebellum (at protein level).

The protein localises to the cytoplasm. The protein resides in the perinuclear region. Its subcellular location is the cell membrane. It is found in the cell projection. It localises to the axon. Functionally, inhibitor of neuronal axonal outgrowth. Acts as a negative regulator of CDC42 and STAT3 and a positive regulator of STMN2. Positive regulator of CDC27. This chain is Myelin-associated neurite-outgrowth inhibitor (Fam168b), found in Mus musculus (Mouse).